A 420-amino-acid polypeptide reads, in one-letter code: Tyrosine--tRNA ligase (420 aa).

Residue Tyr-33 coordinates L-tyrosine. Positions 38–47 (PTADSLHVGH) match the 'HIGH' region motif. Positions 167 and 171 each coordinate L-tyrosine. The 'KMSKS' region signature appears at 227-231 (KFGKT). Lys-230 contributes to the ATP binding site. In terms of domain architecture, S4 RNA-binding spans 353 to 419 (LTVADLLVKV…GKRNYALVKV (67 aa)).

It belongs to the class-I aminoacyl-tRNA synthetase family. TyrS type 1 subfamily. Homodimer.

It localises to the cytoplasm. It carries out the reaction tRNA(Tyr) + L-tyrosine + ATP = L-tyrosyl-tRNA(Tyr) + AMP + diphosphate + H(+). Functionally, catalyzes the attachment of tyrosine to tRNA(Tyr) in a two-step reaction: tyrosine is first activated by ATP to form Tyr-AMP and then transferred to the acceptor end of tRNA(Tyr). This is Tyrosine--tRNA ligase from Anaeromyxobacter dehalogenans (strain 2CP-1 / ATCC BAA-258).